The primary structure comprises 499 residues: Thioredoxin reductase 1, cytoplasmic (499 aa).

Residues 22–23 (SG), 42–43 (DF), 58–59 (TC), and 63–67 (SCIPK) contribute to the FAD site. A disulfide bridge connects residues cysteine 59 and cysteine 64. Lysine 68 carries the post-translational modification N6-succinyllysine. Tyrosine 131 is subject to Phosphotyrosine. Residues 131-132 (YG) and threonine 161 each bind FAD. NADP(+) contacts are provided by residues arginine 166, 198–204 (ASYVALE), 221–222 (RS), arginine 226, 226–228 (RGF), 292–293 (GR), and lysine 315. FAD is bound at residue tyrosine 200. Residues aspartate 334, 341-343 (ELT), and histidine 472 each bind FAD. Glutamate 341 provides a ligand contact to NADP(+). Histidine 472 (proton acceptor) is an active-site residue. Residues 497–498 (CU) constitute a cross-link (cysteinyl-selenocysteine (Cys-Sec)). Selenocysteine 498 is a non-standard amino acid (selenocysteine).

It belongs to the class-I pyridine nucleotide-disulfide oxidoreductase family. Homodimer. The cofactor is FAD. Post-translationally, ISGylated.

It localises to the cytoplasm. It carries out the reaction [thioredoxin]-dithiol + NADP(+) = [thioredoxin]-disulfide + NADPH + H(+). The enzyme catalyses H2O2 + NADPH + H(+) = NADP(+) + 2 H2O. Functionally, reduces disulfideprotein thioredoxin (Trx) to its dithiol-containing form. Homodimeric flavoprotein involved in the regulation of cellular redox reactions, growth and differentiation. Contains a selenocysteine residue at the C-terminal active site that is essential for catalysis. Also has reductase activity on hydrogen peroxide (H2O2). The sequence is that of Thioredoxin reductase 1, cytoplasmic (TXNRD1) from Sus scrofa (Pig).